The following is a 106-amino-acid chain: Cytochrome c (106 aa).

Positions 17, 20, and 21 each coordinate heme c. K75 carries the N6,N6,N6-trimethyllysine modification. Residue M83 participates in heme c binding.

This sequence belongs to the cytochrome c family. Post-translationally, binds 1 heme c group covalently per subunit.

It is found in the mitochondrion intermembrane space. Its function is as follows. Electron carrier protein. The oxidized form of the cytochrome c heme group can accept an electron from the heme group of the cytochrome c1 subunit of cytochrome reductase. Cytochrome c then transfers this electron to the cytochrome oxidase complex, the final protein carrier in the mitochondrial electron-transport chain. The sequence is that of Cytochrome c (CYC1) from Gibberella zeae (strain ATCC MYA-4620 / CBS 123657 / FGSC 9075 / NRRL 31084 / PH-1) (Wheat head blight fungus).